The chain runs to 316 residues: Protein U25 (316 aa).

It belongs to the herpesviridae US22 family.

In Human herpesvirus 6B (HHV-6 variant B), this protein is Protein U25 (U25).